The chain runs to 149 residues: UPF0260 protein Pmen_1776 (149 aa).

This sequence belongs to the UPF0260 family.

This Ectopseudomonas mendocina (strain ymp) (Pseudomonas mendocina) protein is UPF0260 protein Pmen_1776.